The primary structure comprises 405 residues: Envelope glycoprotein M (405 aa).

Topologically, residues 1 to 17 (MKSSKNDTFVYRTWVKT) are intravirion. A helical membrane pass occupies residues 18-38 (LVVYFVMFVMSAVVPITAMFP). Over 39 to 76 (NLGYPCYFNALVDYGALNLTNYNLAHHLTPTLYLEPPE) the chain is Virion surface. Residues 77 to 97 (MFVYITLVFIADCVAFIYYAC) traverse the membrane as a helical segment. Over 98 to 121 (GEVALIKARKKVSGLTDLSAWVSA) the chain is Intravirion. Residues 122 to 142 (VGSPTVLFLAILKLWSIQVFI) form a helical membrane-spanning segment. At 143 to 149 (QVLSYKH) the chain is on the virion surface side. Residues 150–170 (VFLSAFVYFLHFLASVLHACA) form a helical membrane-spanning segment. Residues 171-192 (CVTRFSPVWVVKAQDNSIPQDT) lie on the Intravirion side of the membrane. The chain crosses the membrane as a helical span at residues 193-215 (FLWWVVFYLKPVVTNLYLGCLAL). Residues 216 to 245 (ETLVFSLSVFLALGNSFYFMVGDMVLGAVN) lie on the Virion surface side of the membrane. The helical transmembrane segment at 246–266 (LFLILPIFWYILTEVWLASFL) threads the bilayer. A topological domain (intravirion) is located at residue arginine 267. The helical transmembrane segment at 268 to 288 (HNFGFYCGMFIASIILILPLV) threads the bilayer. Residues 289–299 (RYEAVFVSAKL) lie on the Virion surface side of the membrane. A helical transmembrane segment spans residues 300-320 (HTTVAINVAIIPILCSVAMLI). The Intravirion segment spans residues 321–405 (RICRIFKSMR…TTDSEEEIFP (85 aa)). Residues 346–405 (LESEPRPRPSRTPSPGRNRRRSSTSSSSSRSTRRQRPVSTQALVSSVLPMTTDSEEEIFP) are disordered. Positions 386–397 (QALVSSVLPMTT) are enriched in polar residues.

The protein belongs to the herpesviridae glycoprotein M family. In terms of assembly, interacts (via N-terminus) with gN (via N-terminus). The gM-gN heterodimer forms the gCII complex.

The protein localises to the virion membrane. The protein resides in the host Golgi apparatus. Its subcellular location is the host trans-Golgi network. It localises to the host endosome membrane. It is found in the host nucleus inner membrane. In terms of biological role, envelope glycoprotein important for virion assembly and egress. Plays a role in the correct incorporation of gH-gL into virion membrane. Directs the glycoprotein N (gN) to the host trans-Golgi network. In Epstein-Barr virus (strain B95-8) (HHV-4), this protein is Envelope glycoprotein M.